We begin with the raw amino-acid sequence, 189 residues long: MDYIITGLGNPGERYTFTRHNAGFLAIDYLAQFFNTKVDKIKFKGLVGSFEYAGKKVLLLKPMTYMNASGESIIEAVNFYKIKPEKLIVIYDDIAFDVGVVKMRKKGSDGGHNGIKSIIQCLGTEEFPRIRIGIGVPKYDMVKYVLSEFEDGEKEKIFRAIEKASNGIKILLESDIDRAMNYINGDVVV.

Tyrosine 15 is a tRNA binding site. Histidine 20 serves as the catalytic Proton acceptor. TRNA-binding residues include tyrosine 65, asparagine 67, and asparagine 113.

Belongs to the PTH family. In terms of assembly, monomer.

It is found in the cytoplasm. It carries out the reaction an N-acyl-L-alpha-aminoacyl-tRNA + H2O = an N-acyl-L-amino acid + a tRNA + H(+). In terms of biological role, hydrolyzes ribosome-free peptidyl-tRNAs (with 1 or more amino acids incorporated), which drop off the ribosome during protein synthesis, or as a result of ribosome stalling. Its function is as follows. Catalyzes the release of premature peptidyl moieties from peptidyl-tRNA molecules trapped in stalled 50S ribosomal subunits, and thus maintains levels of free tRNAs and 50S ribosomes. This Caldicellulosiruptor bescii (strain ATCC BAA-1888 / DSM 6725 / KCTC 15123 / Z-1320) (Anaerocellum thermophilum) protein is Peptidyl-tRNA hydrolase.